Consider the following 604-residue polypeptide: Glutamine--fructose-6-phosphate aminotransferase [isomerizing] (604 aa).

Cysteine 2 functions as the Nucleophile; for GATase activity in the catalytic mechanism. Residues 2–219 (CGIMGAVSER…EGDSACVTTQ (218 aa)) form the Glutamine amidotransferase type-2 domain. SIS domains follow at residues 279-427 (LRAS…DNRA) and 454-594 (LASL…VDQP). The For Fru-6P isomerization activity role is filled by lysine 599.

In terms of assembly, homodimer.

It is found in the cytoplasm. The catalysed reaction is D-fructose 6-phosphate + L-glutamine = D-glucosamine 6-phosphate + L-glutamate. Catalyzes the first step in hexosamine metabolism, converting fructose-6P into glucosamine-6P using glutamine as a nitrogen source. This chain is Glutamine--fructose-6-phosphate aminotransferase [isomerizing], found in Legionella pneumophila (strain Lens).